The chain runs to 260 residues: Small ribosomal subunit protein uS2 (260 aa).

The segment at 224 to 260 is disordered; sequence GRQGQDAGEDSAEKTFADTADGEGDFEESSNNENQEA. A compositionally biased stretch (acidic residues) spans 243-260; sequence ADGEGDFEESSNNENQEA.

It belongs to the universal ribosomal protein uS2 family.

The chain is Small ribosomal subunit protein uS2 from Oenococcus oeni (strain ATCC BAA-331 / PSU-1).